The following is a 278-amino-acid chain: Pca operon regulatory protein (278 aa).

The HTH iclR-type domain occupies 31 to 91; the sequence is VAGISKGMAI…SDGHYFYLTP (61 aa). A DNA-binding region (H-T-H motif) is located at residues 53–72; sequence ITMAAEKTGMTRAAARRHLL. Residues 106 to 278 form the IclR-ED domain; it reads LPKISQPLLN…ETARELRNIL (173 aa).

Its function is as follows. Activates transcription of the pca operon. This Acinetobacter baylyi (strain ATCC 33305 / BD413 / ADP1) protein is Pca operon regulatory protein (pcaU).